Here is a 499-residue protein sequence, read N- to C-terminus: Maturase K (499 aa).

The protein belongs to the intron maturase 2 family. MatK subfamily.

Its subcellular location is the plastid. The protein localises to the chloroplast. Functionally, usually encoded in the trnK tRNA gene intron. Probably assists in splicing its own and other chloroplast group II introns. This chain is Maturase K, found in Gymnocladus dioicus (Kentucky coffee tree).